A 195-amino-acid chain; its full sequence is Endoribonuclease YbeY (195 aa).

3 residues coordinate Zn(2+): His152, His156, and His162.

It belongs to the endoribonuclease YbeY family. Zn(2+) serves as cofactor.

It localises to the cytoplasm. Its function is as follows. Single strand-specific metallo-endoribonuclease involved in late-stage 70S ribosome quality control and in maturation of the 3' terminus of the 16S rRNA. The protein is Endoribonuclease YbeY of Rhodopseudomonas palustris (strain BisB5).